The following is a 185-amino-acid chain: Large ribosomal subunit protein uL22 (185 aa).

The protein belongs to the universal ribosomal protein uL22 family. Component of the large ribosomal subunit. Mature ribosomes consist of a small (40S) and a large (60S) subunit. The 40S subunit contains about 32 different proteins and 1 molecule of RNA (18S). The 60S subunit contains 45 different proteins and 3 molecules of RNA (25S, 5.8S and 5S).

The protein localises to the cytoplasm. In terms of biological role, component of the ribosome, a large ribonucleoprotein complex responsible for the synthesis of proteins in the cell. The small ribosomal subunit (SSU) binds messenger RNAs (mRNAs) and translates the encoded message by selecting cognate aminoacyl-transfer RNA (tRNA) molecules. The large subunit (LSU) contains the ribosomal catalytic site termed the peptidyl transferase center (PTC), which catalyzes the formation of peptide bonds, thereby polymerizing the amino acids delivered by tRNAs into a polypeptide chain. The nascent polypeptides leave the ribosome through a tunnel in the LSU and interact with protein factors that function in enzymatic processing, targeting, and the membrane insertion of nascent chains at the exit of the ribosomal tunnel. The protein is Large ribosomal subunit protein uL22 of Candida albicans (strain SC5314 / ATCC MYA-2876) (Yeast).